The chain runs to 815 residues: Cell division control protein 53 (815 aa).

Residues 9 to 280 are required for interaction with SKP1/CBF3D and F-box protein; it reads DDLEATWNFI…WDDHTKKPLS (272 aa). Residues 448 to 748 form a required for interaction with CDC34/UBC3 region; it reads KKATKPEVAS…IEKELNTERQ (301 aa). In terms of domain architecture, Cullin neddylation spans 746-807; the sequence is ERQIFLEACI…QKGYLQRGDD (62 aa). Lys-760 participates in a covalent cross-link: Glycyl lysine isopeptide (Lys-Gly) (interchain with G-Cter in NEDD8).

The protein belongs to the cullin family. Component of multiple SCF (SKP1-CUL1-F-box) E3 ubiquitin-protein ligase complexes formed of CUL1, SKP1/HRT1, RBX1 and a variable F-box domain-containing protein as substrate-specific adapter. Component of the SCF(CDC4) complex containing CDC4. Component of the SCF(MET30) complex containing MET30. Component of the SCF(GRR1) complex containing GRR1. Component of the probable SCF(DIA2) complex containing DIA2. Component of the probable SCF(YDR131C) complex containing YDR131C. Component of the probable SCF(YDR306C) complex containing YDR306C. Component of the probable SCF(YLR224W) complex containing YLR224W. Component of the probable SCF(YJL149W) complex containing YJL149W. Component of the probable SCF(YNL311C) complex containing YNL311C. Component of the probable SCF(MDM30) complex containing MDM30. Component of the probable SCF(UFO1) complex containing UFO1. Component of the probable SCF(HRT3) complex containing HRT3. Component of the probable SCF(YBR280C) complex containing YBR280C. Component of the probable SCF(YBR352W) complex containing YBR352W. Interacts with DCN1, YBR280C, YLR224W and YLR352W. The unneddylated form interacts with LAG2/CAND1 and the interaction mediates the exchange of the F-box substrate-specific subunit. Neddylated; enhancing the ubiquitin-ligase activity.

Its subcellular location is the cytoplasm. It is found in the nucleus. Functionally, core component of multiple cullin-RING-based SCF (SKP1-CUL1-F-box) E3 ubiquitin-protein ligase complexes which mediate the ubiquitination and subsequent proteasomal degradation of target proteins. As a scaffold protein may contribute to catalysis through positioning of the substrate and the ubiquitin-conjugating enzyme. The SCF complex associates with CDC34 as the E2 ubiquitin-conjugating enzyme. The functional specificity of the SCF complex depends on the type of F-box protein. SCF(CDC4) controls the G1-to-S phase transition; it directs ubiquitination of the phosphorylated CDK inhibitor SIC1 and of CDC6. SCF(CDC4) directs ubiquitination of GCN4. SCF(GRR1) directs ubiquitination of phosphorylated CLN1, CLN2 and GIC2. SCF(MET30) directs ubiquitination of MET4. SCF(DIA2) is specifically involved in the pheromone induced degradation of phosphorylated TEC1. SCF(MDM30) seems to direct ubiquitination of FZ01. Involved in the regulation of methionine biosynthesis genes. The sequence is that of Cell division control protein 53 (CDC53) from Saccharomyces cerevisiae (strain ATCC 204508 / S288c) (Baker's yeast).